The chain runs to 2205 residues: Kinesin-related protein 1 (2205 aa).

Positions 2–355 (NVQVAVRVRP…LRYADSAKKI (354 aa)) constitute a Kinesin motor domain. Residue 102-109 (GQTGSGKS) coordinates ATP. Positions 362–448 (NEDAQSKLIR…EDRMAALKDM (87 aa)) form a coiled coil. In terms of domain architecture, FHA spans 483 to 595 (TRIGRSDSEI…LTTGNRVILG (113 aa)). A compositionally biased stretch (low complexity) spans 525-548 (FMNNNNNKENSSSTTPTSSKSPSK). Disordered stretches follow at residues 525-568 (FMNN…EKKL), 971-993 (SKQQ…SSKN), 1084-1226 (DNPL…TNSA), and 1455-1508 (THQQ…STIV). Residues 549–568 (PKSEKEKENNNDDDDGEKKL) show a composition bias toward basic and acidic residues. Low complexity-rich tracts occupy residues 978 to 991 (TSSS…SSSS), 1089 to 1103 (SSSA…PNNS), and 1117 to 1142 (TPYS…QGTP). Residues 1143 to 1164 (YNPQSNNPNVISNAPPTPNSNL) show a composition bias toward polar residues. Composition is skewed to low complexity over residues 1169–1226 (SLAA…TNSA) and 1455–1492 (THQQ…TSSS). In terms of domain architecture, PH spans 1523–1616 (EDETSGYLKK…WVQTLDPLRK (94 aa)). 3 coiled-coil regions span residues 1879–1918 (KDES…ETSA), 1946–2034 (SAQV…NGMA), and 2075–2149 (AHQS…KKKY).

Belongs to the TRAFAC class myosin-kinesin ATPase superfamily. Kinesin family. Unc-104 subfamily. As to quaternary structure, homodimer.

The protein resides in the cytoplasm. Its subcellular location is the cytoskeleton. The protein localises to the cytoplasmic vesicle membrane. Functionally, microtubule-associated force-producing protein that plays a role in organelle transport. Its motor activity is directed toward the microtubule's plus end. Transports cytoplasmic vesicles and particularly phosphatidylinositol 4,5-bisphosphate-containing liposomes along microtubules. The sequence is that of Kinesin-related protein 1 (kif1) from Dictyostelium discoideum (Social amoeba).